Reading from the N-terminus, the 261-residue chain is Spermatogenesis-associated protein 46 (261 aa).

Positions 140 to 159 (SSSSSPENTCPREATKKSRH) are disordered.

Testis-specific.

The protein resides in the nucleus membrane. In terms of biological role, plays a role in spermiogenesis and fertilization. This Homo sapiens (Human) protein is Spermatogenesis-associated protein 46.